We begin with the raw amino-acid sequence, 549 residues long: Glucose-6-phosphate isomerase (549 aa).

The active-site Proton donor is Glu-355. Residues His-386 and Lys-514 contribute to the active site.

It belongs to the GPI family.

The protein resides in the cytoplasm. It catalyses the reaction alpha-D-glucose 6-phosphate = beta-D-fructose 6-phosphate. The protein operates within carbohydrate biosynthesis; gluconeogenesis. It functions in the pathway carbohydrate degradation; glycolysis; D-glyceraldehyde 3-phosphate and glycerone phosphate from D-glucose: step 2/4. In terms of biological role, catalyzes the reversible isomerization of glucose-6-phosphate to fructose-6-phosphate. In Sodalis glossinidius (strain morsitans), this protein is Glucose-6-phosphate isomerase.